The chain runs to 446 residues: tRNA-2-methylthio-N(6)-dimethylallyladenosine synthase (446 aa).

The region spanning 2 to 119 (KKIYIKTFGC…LPELIAQRRE (118 aa)) is the MTTase N-terminal domain. The [4Fe-4S] cluster site is built by Cys-11, Cys-48, Cys-82, Cys-156, Cys-160, and Cys-163. The Radical SAM core domain maps to 142-376 (RVEGGAAFVS…RIEAQAQGVN (235 aa)). In terms of domain architecture, TRAM spans 377-440 (RSMVGSVQRV…PHSLRGEAVT (64 aa)).

This sequence belongs to the methylthiotransferase family. MiaB subfamily. As to quaternary structure, monomer. Requires [4Fe-4S] cluster as cofactor.

It localises to the cytoplasm. The catalysed reaction is N(6)-dimethylallyladenosine(37) in tRNA + (sulfur carrier)-SH + AH2 + 2 S-adenosyl-L-methionine = 2-methylsulfanyl-N(6)-dimethylallyladenosine(37) in tRNA + (sulfur carrier)-H + 5'-deoxyadenosine + L-methionine + A + S-adenosyl-L-homocysteine + 2 H(+). In terms of biological role, catalyzes the methylthiolation of N6-(dimethylallyl)adenosine (i(6)A), leading to the formation of 2-methylthio-N6-(dimethylallyl)adenosine (ms(2)i(6)A) at position 37 in tRNAs that read codons beginning with uridine. The polypeptide is tRNA-2-methylthio-N(6)-dimethylallyladenosine synthase (Thiobacillus denitrificans (strain ATCC 25259 / T1)).